The chain runs to 27 residues: Chitinase 47 kDa (27 aa).

One can recognise a GH18 domain in the interval 3-27 (SKVVGYFTEWGTYDRKYYVKNIEXS).

This sequence belongs to the glycosyl hydrolase 18 family. Chitinase class II subfamily. Homodimer.

The catalysed reaction is Random endo-hydrolysis of N-acetyl-beta-D-glucosaminide (1-&gt;4)-beta-linkages in chitin and chitodextrins.. Able to cleave chitin oligomers from N=3 to 6. This chain is Chitinase 47 kDa, found in Streptomyces olivaceoviridis (Streptomyces corchorusii).